The primary structure comprises 170 residues: MKDNERRILLGRIVGAFGVRGEIKLESWTEPRSAIFRYQPWILRSPNGQESTLEGARGRDSGKHLVARFPGIEDRDTVEAMHGTEVYVARSALPPPNADEYYWVDLEGLDVKTTEGVALGQVSHLFSTGANDVVVVRGDRERMIPFVLPEFVKSVDFEANLVVVDWDPEF.

One can recognise a PRC barrel domain in the interval 97–170; that stretch reads NADEYYWVDL…LVVVDWDPEF (74 aa).

The protein belongs to the RimM family. Binds ribosomal protein uS19.

It is found in the cytoplasm. An accessory protein needed during the final step in the assembly of 30S ribosomal subunit, possibly for assembly of the head region. Essential for efficient processing of 16S rRNA. May be needed both before and after RbfA during the maturation of 16S rRNA. It has affinity for free ribosomal 30S subunits but not for 70S ribosomes. This Stenotrophomonas maltophilia (strain R551-3) protein is Ribosome maturation factor RimM.